The following is a 256-amino-acid chain: 5-keto-4-deoxy-D-glucarate aldolase (256 aa).

His-50 acts as the Proton acceptor in catalysis. Gln-151 serves as a coordination point for substrate. Glu-153 serves as a coordination point for Mg(2+). Ser-178 and Asp-179 together coordinate substrate. A Mg(2+)-binding site is contributed by Asp-179.

It belongs to the HpcH/HpaI aldolase family. KDGluc aldolase subfamily. In terms of assembly, homohexamer; trimer of dimers. Mg(2+) is required as a cofactor.

It carries out the reaction 5-dehydro-4-deoxy-D-glucarate = 2-hydroxy-3-oxopropanoate + pyruvate. It catalyses the reaction 2-dehydro-3-deoxy-D-glucarate = 2-hydroxy-3-oxopropanoate + pyruvate. The protein operates within carbohydrate acid metabolism; galactarate degradation; D-glycerate from galactarate: step 2/3. Catalyzes the reversible retro-aldol cleavage of both 5-keto-4-deoxy-D-glucarate and 2-keto-3-deoxy-D-glucarate to pyruvate and tartronic semialdehyde. This Salmonella arizonae (strain ATCC BAA-731 / CDC346-86 / RSK2980) protein is 5-keto-4-deoxy-D-glucarate aldolase.